The sequence spans 262 residues: Tryptophan synthase alpha chain (262 aa).

Active-site proton acceptor residues include E48 and D59.

The protein belongs to the TrpA family. Tetramer of two alpha and two beta chains.

It carries out the reaction (1S,2R)-1-C-(indol-3-yl)glycerol 3-phosphate + L-serine = D-glyceraldehyde 3-phosphate + L-tryptophan + H2O. The protein operates within amino-acid biosynthesis; L-tryptophan biosynthesis; L-tryptophan from chorismate: step 5/5. The alpha subunit is responsible for the aldol cleavage of indoleglycerol phosphate to indole and glyceraldehyde 3-phosphate. This is Tryptophan synthase alpha chain from Helicobacter pylori (strain ATCC 700392 / 26695) (Campylobacter pylori).